Consider the following 176-residue polypeptide: Ribosome maturation factor RimM (176 aa).

Residues 97 to 176 (EDEFYWRDLI…QILVDWDPDF (80 aa)) form the PRC barrel domain.

The protein belongs to the RimM family. Binds ribosomal protein uS19.

It localises to the cytoplasm. Functionally, an accessory protein needed during the final step in the assembly of 30S ribosomal subunit, possibly for assembly of the head region. Essential for efficient processing of 16S rRNA. May be needed both before and after RbfA during the maturation of 16S rRNA. It has affinity for free ribosomal 30S subunits but not for 70S ribosomes. The chain is Ribosome maturation factor RimM from Shewanella halifaxensis (strain HAW-EB4).